The chain runs to 351 residues: D-glucoside 3-dehydrogenase (351 aa).

This sequence belongs to the Gfo/Idh/MocA family.

It catalyses the reaction a D-glucoside + NAD(+) = a 3-dehydro-D-glucoside + NADH + H(+). In terms of biological role, catalyzes the NADH-dependent reduction of the oxo group at C3 of 3-dehydro-D-glucosides leading to D-glucosides. Probably functions in a metabolic pathway that transforms D-gulosides to D-glucosides. Can use 3-dehydro-D-glucose, methyl alpha-3-dehydro-D-glucoside and methyl beta-3-dehydro-D-glucoside as substrates in vitro. However, the actual specific physiological substrates for this metabolic pathway are unknown. To a lesser extent, is also able to catalyze the reverse reactions, i.e. the NAD(+)-dependent oxidation of the hydroxyl group at C3 of D-glucosides leading to 3-dehydro-D-glucosides. Cannot act on UDP-glucose, UDP-N-acetyl-D-glucosamine, D-glucosamine, N-acetyl-D-glucosamine, or UDP-D-galactose. This Escherichia coli (strain K12) protein is D-glucoside 3-dehydrogenase (ycjS).